The chain runs to 86 residues: Small ribosomal subunit protein bS16 (86 aa).

The protein belongs to the bacterial ribosomal protein bS16 family.

The sequence is that of Small ribosomal subunit protein bS16 from Xylella fastidiosa (strain 9a5c).